The following is a 28-amino-acid chain: Putative fruR/shl operon leader peptide (28 aa).

This is Putative fruR/shl operon leader peptide (fruL) from Escherichia coli O6:H1 (strain CFT073 / ATCC 700928 / UPEC).